Here is a 249-residue protein sequence, read N- to C-terminus: Proteasome subunit alpha type-7 (249 aa).

It belongs to the peptidase T1A family. As to quaternary structure, the 26S proteasome consists of a 20S proteasome core and two 19S regulatory subunits. The 20S proteasome core is a barrel-shaped complex made of 28 subunits that are arranged in four stacked rings. The two outer rings are each formed by seven alpha subunits, and the two inner rings are formed by seven beta subunits. The proteolytic activity is exerted by three beta-subunits PSMB5, PSMB6 and PSMB7. PSMA7 interacts directly with the PSMG1-PSMG2 heterodimer which promotes 20S proteasome assembly. Interacts with HIF1A. Interacts with RAB7A. Interacts with PRKN. Interacts with ABL1 and ABL2. Interacts with EMAP2. Interacts with MAVS.

The protein localises to the cytoplasm. It is found in the nucleus. In terms of biological role, component of the 20S core proteasome complex involved in the proteolytic degradation of most intracellular proteins. This complex plays numerous essential roles within the cell by associating with different regulatory particles. Associated with two 19S regulatory particles, forms the 26S proteasome and thus participates in the ATP-dependent degradation of ubiquitinated proteins. The 26S proteasome plays a key role in the maintenance of protein homeostasis by removing misfolded or damaged proteins that could impair cellular functions, and by removing proteins whose functions are no longer required. Associated with the PA200 or PA28, the 20S proteasome mediates ubiquitin-independent protein degradation. This type of proteolysis is required in several pathways including spermatogenesis (20S-PA200 complex) or generation of a subset of MHC class I-presented antigenic peptides (20S-PA28 complex). Inhibits the transactivation function of HIF-1A under both normoxic and hypoxia-mimicking conditions. The interaction with EMAP2 increases the proteasome-mediated HIF-1A degradation under the hypoxic conditions. Plays a role in hepatitis C virus internal ribosome entry site-mediated translation. Mediates nuclear translocation of the androgen receptor (AR) and thereby enhances androgen-mediated transactivation. Promotes MAVS degradation and thereby negatively regulates MAVS-mediated innate immune response. The protein is Proteasome subunit alpha type-7 (PSMA7) of Gallus gallus (Chicken).